Reading from the N-terminus, the 283-residue chain is Splicing factor U2af small subunit B (283 aa).

The C3H1-type 1 zinc finger occupies 12 to 40 (EKDRVNCPFYFKIGACRHGDRCSRLHNRP). The region spanning 44–146 (PTLLLSNMYQ…RPIIADFSPV (103 aa)) is the RRM domain. A C3H1-type 2 zinc finger spans residues 148–175 (DFREATCRQYEENSCNRGGYCNFMHVKQ). The span at 191-210 (SYRRGSRSRSRSISPRRKRE) shows a compositional bias: basic residues. Residues 191–283 (SYRRGSRSRS…QWNRERDEGV (93 aa)) form a disordered region. A compositionally biased stretch (basic and acidic residues) spans 211–245 (HSRERERGDVRDRDRHGNGKRSSDRSERHDRDGGG). Residues 246–259 (RRRHGSPKRSRSPR) are compositionally biased toward basic residues. Over residues 260–283 (NVREGSEERRARIEQWNRERDEGV) the composition is skewed to basic and acidic residues.

It belongs to the splicing factor SR family. As to quaternary structure, component of the spliceosome. Homo- and heterodimer. Interacts with RNU1, U2AF35A and SR45.

It is found in the nucleus speckle. In terms of biological role, necessary for the splicing of pre-mRNA. Probably active at the 3' splice sites. This chain is Splicing factor U2af small subunit B (U2AF35B), found in Arabidopsis thaliana (Mouse-ear cress).